Consider the following 171-residue polypeptide: MPRRSRYDDDEERLPEGMTRVGYDADTGVYTFQDSDGSYWEGASGSRYGQLTRVGHELAGEDDDAQPFLPSNAHAGPKVSWRHELMPLLNFGVIIGVALLLLWWYLHVAAGPDKGSAQDCPSGTKPYTIHQGDTCWDIAESHSVGVDDILTLNPELDCDKLSIGSQICLKD.

In terms of domain architecture, LysM spans 125–169; that stretch reads KPYTIHQGDTCWDIAESHSVGVDDILTLNPELDCDKLSIGSQICL.

It belongs to the secreted LysM effector family.

In terms of biological role, might have a role in sequestration of chitin oligosaccharides (breakdown products of fungal cell walls that are released during invasion and act as triggers of host immunity) to dampen host defense. The chain is Secreted LysM effector Blys4 from Beauveria bassiana (strain ARSEF 2860) (White muscardine disease fungus).